Consider the following 352-residue polypeptide: Gamma-aminobutyric acid-binding protein (352 aa).

Residues 1–28 (MFKSLHQYAHVFSRLSLFGLAFAAAAQA) form the signal peptide.

It belongs to the bacterial solute-binding protein 1 family.

It localises to the periplasm. Binds specifically gamma-aminobutyric acid (GABA) with nanomolar affinity. Does not bind structurally related compounds such as 4-aminovaleric acid, spermidine, histamine and butyric acid. The sequence is that of Gamma-aminobutyric acid-binding protein from Pseudomonas aeruginosa (strain ATCC 15692 / DSM 22644 / CIP 104116 / JCM 14847 / LMG 12228 / 1C / PRS 101 / PAO1).